The primary structure comprises 579 residues: Cyclin-T1-5 (579 aa).

2 disordered regions span residues 1 to 27 and 271 to 419; these read MAGV…HEKQ and RVPA…GDAL. The span at 11–20 shows a compositional bias: polar residues; sequence YSESGVSSHS. Residues 274–283 show a composition bias toward low complexity; it reads ASQGSEVESS. Over residues 306–334 the composition is skewed to polar residues; it reads SRQTSSVRSTHEQSNSDNHGGSSKGVLNQ. Basic and acidic residues-rich tracts occupy residues 349-380 and 389-414; these read DNKE…EAPH and PGKD…RNVD. A Phosphoserine modification is found at S423. 3 stretches are compositionally biased toward basic and acidic residues: residues 474 to 512, 538 to 556, and 563 to 579; these read DEKT…KNTE, KQSE…ESHK, and HHGD…NNHS. The disordered stretch occupies residues 474 to 579; that stretch reads DEKTKERKVQ…RRHSQENNHS (106 aa).

It belongs to the cyclin family. Cyclin T subfamily.

The chain is Cyclin-T1-5 (CYCT1-5) from Arabidopsis thaliana (Mouse-ear cress).